A 506-amino-acid chain; its full sequence is Maturase K (506 aa).

This sequence belongs to the intron maturase 2 family. MatK subfamily.

The protein localises to the plastid. Its subcellular location is the chloroplast. Usually encoded in the trnK tRNA gene intron. Probably assists in splicing its own and other chloroplast group II introns. The chain is Maturase K from Prunus dulcis (Almond).